A 346-amino-acid polypeptide reads, in one-letter code: Carbamoyl phosphate synthase small chain (346 aa).

The tract at residues 1-160 is CPSase; sequence MEDGSVFAGR…SVKEPVLLGE (160 aa). The L-glutamine site is built by Ser39, Gly209, and Gly211. The Glutamine amidotransferase type-1 domain maps to 164-346; that stretch reads CIGVVDCGVK…FLKLVERHGH (183 aa). Cys237 (nucleophile) is an active-site residue. L-glutamine is bound by residues Leu238, Gln241, Asn280, Gly282, and Tyr283. Residues His320 and Glu322 contribute to the active site.

It belongs to the CarA family. As to quaternary structure, composed of two chains; the small (or glutamine) chain promotes the hydrolysis of glutamine to ammonia, which is used by the large (or ammonia) chain to synthesize carbamoyl phosphate. Tetramer of heterodimers (alpha,beta)4.

It catalyses the reaction hydrogencarbonate + L-glutamine + 2 ATP + H2O = carbamoyl phosphate + L-glutamate + 2 ADP + phosphate + 2 H(+). The catalysed reaction is L-glutamine + H2O = L-glutamate + NH4(+). It functions in the pathway amino-acid biosynthesis; L-arginine biosynthesis; carbamoyl phosphate from bicarbonate: step 1/1. Its pathway is pyrimidine metabolism; UMP biosynthesis via de novo pathway; (S)-dihydroorotate from bicarbonate: step 1/3. Functionally, small subunit of the glutamine-dependent carbamoyl phosphate synthetase (CPSase). CPSase catalyzes the formation of carbamoyl phosphate from the ammonia moiety of glutamine, carbonate, and phosphate donated by ATP, constituting the first step of 2 biosynthetic pathways, one leading to arginine and/or urea and the other to pyrimidine nucleotides. The small subunit (glutamine amidotransferase) binds and cleaves glutamine to supply the large subunit with the substrate ammonia. The protein is Carbamoyl phosphate synthase small chain of Pyrobaculum aerophilum (strain ATCC 51768 / DSM 7523 / JCM 9630 / CIP 104966 / NBRC 100827 / IM2).